A 351-amino-acid polypeptide reads, in one-letter code: DNA polymerase IV (351 aa).

The 182-residue stretch at 4–185 (IIHVDMDCFF…LPLAKIPGVG (182 aa)) folds into the UmuC domain. Residues aspartate 8 and aspartate 103 each coordinate Mg(2+). Glutamate 104 is an active-site residue.

It belongs to the DNA polymerase type-Y family. As to quaternary structure, monomer. Requires Mg(2+) as cofactor.

The protein localises to the cytoplasm. It carries out the reaction DNA(n) + a 2'-deoxyribonucleoside 5'-triphosphate = DNA(n+1) + diphosphate. Its function is as follows. Poorly processive, error-prone DNA polymerase involved in untargeted mutagenesis. Copies undamaged DNA at stalled replication forks, which arise in vivo from mismatched or misaligned primer ends. These misaligned primers can be extended by PolIV. Exhibits no 3'-5' exonuclease (proofreading) activity. May be involved in translesional synthesis, in conjunction with the beta clamp from PolIII. This Salmonella arizonae (strain ATCC BAA-731 / CDC346-86 / RSK2980) protein is DNA polymerase IV.